Consider the following 1357-residue polypeptide: DNA-directed RNA polymerase subunit beta (1357 aa).

The protein belongs to the RNA polymerase beta chain family. As to quaternary structure, the RNAP catalytic core consists of 2 alpha, 1 beta, 1 beta' and 1 omega subunit. When a sigma factor is associated with the core the holoenzyme is formed, which can initiate transcription.

The enzyme catalyses RNA(n) + a ribonucleoside 5'-triphosphate = RNA(n+1) + diphosphate. Its function is as follows. DNA-dependent RNA polymerase catalyzes the transcription of DNA into RNA using the four ribonucleoside triphosphates as substrates. This chain is DNA-directed RNA polymerase subunit beta, found in Pseudomonas fluorescens (strain ATCC BAA-477 / NRRL B-23932 / Pf-5).